Here is a 228-residue protein sequence, read N- to C-terminus: MLKLKQQVFEANMDLPRYGLVTFTWGNVSAIDRERGLVVIKPSGVAYETMKADDMVVVDMSGKVVEGEYRPSSDTATHLELYRRYPSLGGIVHTHSTHATAWAQAGLAIPALGTTHADYFFGDIPCTRGLSEEEVQGEYELNTGKVIIETLGNAEPLHTPGIVVYQHGPFAWGKDAHDAVHNAVVMEEVAKMAWIARGINPQLNHIDSFLMNKHFMRKHGPNAYYGQK.

Residues 26–27 (GN), 43–44 (SG), and 72–73 (SS) contribute to the substrate site. Asp74, His93, and His95 together coordinate Zn(2+). Residue Asp118 is the Proton donor/acceptor of the active site. His167 serves as a coordination point for Zn(2+). Tyr225 acts as the Proton donor/acceptor in catalysis.

This sequence belongs to the aldolase class II family. AraD/FucA subfamily. Zn(2+) is required as a cofactor.

It catalyses the reaction L-ribulose 5-phosphate = D-xylulose 5-phosphate. It participates in cofactor degradation; L-ascorbate degradation; D-xylulose 5-phosphate from L-ascorbate: step 4/4. Functionally, catalyzes the isomerization of L-ribulose 5-phosphate to D-xylulose 5-phosphate. Is involved in the anaerobic L-ascorbate utilization. The chain is L-ribulose-5-phosphate 4-epimerase UlaF from Escherichia coli (strain SE11).